Here is a 459-residue protein sequence, read N- to C-terminus: Ribulose bisphosphate carboxylase large chain (459 aa).

Lysine 4 carries the post-translational modification N6,N6,N6-trimethyllysine. Substrate-binding residues include asparagine 113 and threonine 163. Lysine 165 (proton acceptor) is an active-site residue. Lysine 167 provides a ligand contact to substrate. Positions 191, 193, and 194 each coordinate Mg(2+). The residue at position 191 (lysine 191) is an N6-carboxylysine. The active-site Proton acceptor is the histidine 284. Substrate is bound by residues arginine 285, histidine 317, and serine 369.

The protein belongs to the RuBisCO large chain family. Type I subfamily. Heterohexadecamer of 8 large chains and 8 small chains; disulfide-linked. The disulfide link is formed within the large subunit homodimers. Requires Mg(2+) as cofactor. The disulfide bond which can form in the large chain dimeric partners within the hexadecamer appears to be associated with oxidative stress and protein turnover.

The protein resides in the plastid. Its subcellular location is the chloroplast. It carries out the reaction 2 (2R)-3-phosphoglycerate + 2 H(+) = D-ribulose 1,5-bisphosphate + CO2 + H2O. The catalysed reaction is D-ribulose 1,5-bisphosphate + O2 = 2-phosphoglycolate + (2R)-3-phosphoglycerate + 2 H(+). In terms of biological role, ruBisCO catalyzes two reactions: the carboxylation of D-ribulose 1,5-bisphosphate, the primary event in carbon dioxide fixation, as well as the oxidative fragmentation of the pentose substrate in the photorespiration process. Both reactions occur simultaneously and in competition at the same active site. In Morus alba (White mulberry), this protein is Ribulose bisphosphate carboxylase large chain.